The chain runs to 418 residues: MRVLVLGAGVVGTTSAWYLARAGHQVTVVDRQPVAGNETSFANGGQISVSHAEPWANPHVLPRVLKWLGREDAPLLWRWRADPAQLAWGLRFLGECFPGRVRRNIAAIVSMALYSRGRLQALREELGLQYDHLERGILHIYTDRDEFSAALDAARVMRQFGLDRDTVDVDKCLEIEPALSGARHLLVGGDYTRSDESGDANKFTCALAEHAKAAGVDFRYGLTVERIATSGSEIVGVLVQHSEGGPERLTADAYVVALGSYSPLLLRPIGVGLPVYPAKGYSATLTLAEASLAPTVSLTDDERKLVFSRLGNRLRIAGTAEFNGYNLELNPVRCQALIDRTRQLFPRLEIVGEPTLWCGLRPATPSNVPYIGQTRYRNLWLNTGHGTLGWTMACGSAASLAEMISGRRPEPEFPFLRC.

3–17 (VLVLGAGVVGTTSAW) is an FAD binding site.

This sequence belongs to the DadA oxidoreductase family. It depends on FAD as a cofactor.

It carries out the reaction a D-alpha-amino acid + A + H2O = a 2-oxocarboxylate + AH2 + NH4(+). The protein operates within amino-acid degradation; D-alanine degradation; NH(3) and pyruvate from D-alanine: step 1/1. Oxidative deamination of D-amino acids. This Dechloromonas aromatica (strain RCB) protein is D-amino acid dehydrogenase.